The primary structure comprises 177 residues: Ribulose bisphosphate carboxylase small subunit, chloroplastic 6 (177 aa).

Residues 1-56 (MASSMMASTAAVARVGPAQTNMVAPFNGLRSSVAFPATRKANNDLSTLPSNGGRVS) constitute a chloroplast transit peptide.

This sequence belongs to the RuBisCO small chain family. In terms of assembly, heterohexadecamer of 8 large and 8 small subunits.

The protein resides in the plastid. The protein localises to the chloroplast. RuBisCO catalyzes two reactions: the carboxylation of D-ribulose 1,5-bisphosphate, the primary event in carbon dioxide fixation, as well as the oxidative fragmentation of the pentose substrate. Both reactions occur simultaneously and in competition at the same active site. Although the small subunit is not catalytic it is essential for maximal activity. This is Ribulose bisphosphate carboxylase small subunit, chloroplastic 6 from Lemna gibba (Swollen duckweed).